The following is a 307-amino-acid chain: Probable acetylxylan esterase A (307 aa).

The signal sequence occupies residues 1–19 (MILLSYLLTYLLCALTCSA). Residue serine 150 is the Charge relay system of the active site. Residues asparagine 192 and asparagine 270 are each glycosylated (N-linked (GlcNAc...) asparagine).

This sequence belongs to the carbohydrate esterase 1 (CE1) family. AxeA subfamily. Monomer.

Its subcellular location is the secreted. The enzyme catalyses Deacetylation of xylans and xylo-oligosaccharides.. It participates in glycan degradation; xylan degradation. Acetylxylan esterase involved in the hydrolysis of xylan, a major structural heterogeneous polysaccharide found in plant biomass representing the second most abundant polysaccharide in the biosphere, after cellulose. Degrades acetylated xylans by cleaving acetyl side groups from the hetero-xylan backbone. The protein is Probable acetylxylan esterase A (axeA) of Aspergillus flavus.